Here is a 123-residue protein sequence, read N- to C-terminus: Small ribosomal subunit protein uS13 (123 aa).

Positions 93 to 123 (RRNLPVRGQKTKTNARTRKGPKRAIGGKKKK) are disordered.

Belongs to the universal ribosomal protein uS13 family. In terms of assembly, part of the 30S ribosomal subunit. Forms a loose heterodimer with protein S19. Forms two bridges to the 50S subunit in the 70S ribosome.

In terms of biological role, located at the top of the head of the 30S subunit, it contacts several helices of the 16S rRNA. In the 70S ribosome it contacts the 23S rRNA (bridge B1a) and protein L5 of the 50S subunit (bridge B1b), connecting the 2 subunits; these bridges are implicated in subunit movement. Contacts the tRNAs in the A and P-sites. This chain is Small ribosomal subunit protein uS13, found in Clostridium botulinum (strain Kyoto / Type A2).